The sequence spans 137 residues: Histone H2B.3 (137 aa).

Over residues 1–37 the composition is skewed to basic and acidic residues; it reads KPAEKKPAEKTPVAEKAPAEKKPKAGKKLPKDAAAGD. The tract at residues 1 to 45 is disordered; that stretch reads KPAEKKPAEKTPVAEKAPAEKKPKAGKKLPKDAAAGDKKKKRSKK. 2 positions are modified to N6-acetyllysine: lysine 27 and lysine 28. A Glycyl lysine isopeptide (Lys-Gly) (interchain with G-Cter in ubiquitin) cross-link involves residue lysine 133.

The protein belongs to the histone H2B family. In terms of assembly, the nucleosome is a histone octamer containing two molecules each of H2A, H2B, H3 and H4 assembled in one H3-H4 heterotetramer and two H2A-H2B heterodimers. The octamer wraps approximately 147 bp of DNA. Can be acetylated to formH2BK33ac and H2BK34ac. Post-translationally, monoubiquitinated to form H2BK143ub1; may give a specific tag for epigenetic transcriptional activation. In terms of tissue distribution, ubiquitous. Highest level in shoots, fruits and young flower buds, including petals, anthers and ovules.

It localises to the nucleus. It is found in the chromosome. In terms of biological role, core component of nucleosome. Nucleosomes wrap and compact DNA into chromatin, limiting DNA accessibility to the cellular machineries which require DNA as a template. Histones thereby play a central role in transcription regulation, DNA repair, DNA replication and chromosomal stability. DNA accessibility is regulated via a complex set of post-translational modifications of histones, also called histone code, and nucleosome remodeling. This is Histone H2B.3 (H2B-3) from Solanum lycopersicum (Tomato).